Here is a 447-residue protein sequence, read N- to C-terminus: MIRNVIIGLLAVAVIATGYWGFQEQQQSQILTVQAENGYQRAFHELAYHIDQIEDQLGATMAMNTRRQLTPSLAEVWRLTSLASEEIGQLPLGIVDLSKTEEFLHHLGTFSYKTSIRDLDKEPLTDEEYEKLEKFHDYSKTIKNDLRKTQAMTLKKDMRWLDLNKEFQAQDEPLDNAIVDGFRTMDEHVKGASEVEWGPGMVIRNDHEKKLEKRLEKRKITEEEAKEIALSYVDMEQATDVIVSETGDGLDMYSVIIDDPERQAHYYLDMTQQGGHPIWFLQERQINEQNISLNEASNKAQEFLEEHDKENMQLVDSKQYDSIGVFEFVYLEDNVRVYPDTIKVEVALDEGDIIGYEAMSYLVNHHDRDLEEPELTADEARERLNPRLEVMEDHIALIQNDLGEEVLCYEFFGVINDETYRIYINAEDGEEEKVEKMQEAEPVYDFD.

The protein belongs to the YpeB family.

Functionally, required for spore cortex hydrolysis during germination. Appears to be required for either expression, localization, activation or function of SleB. This chain is Sporulation protein YpeB, found in Halalkalibacterium halodurans (strain ATCC BAA-125 / DSM 18197 / FERM 7344 / JCM 9153 / C-125) (Bacillus halodurans).